Here is an 87-residue protein sequence, read N- to C-terminus: Large ribosomal subunit protein bL31B (87 aa).

The protein belongs to the bacterial ribosomal protein bL31 family. Type B subfamily. In terms of assembly, part of the 50S ribosomal subunit.

In Staphylococcus carnosus (strain TM300), this protein is Large ribosomal subunit protein bL31B.